The sequence spans 617 residues: Probable potassium transport system protein Kup 3 (617 aa).

Helical transmembrane passes span 42 to 62 (VASL…ALLI), 95 to 115 (LVVG…TPAI), 129 to 149 (PSLA…LFMM), 160 to 180 (IFGP…IHGI), 206 to 226 (VSFA…AMYA), 240 to 260 (WFAI…ALLI), 282 to 302 (LVAF…SGVF), 330 to 350 (IYVP…VLSF), 360 to 380 (YGIA…LVAI), 386 to 406 (PWLV…FFSA), and 411 to 431 (LFEG…MMLT).

The protein belongs to the HAK/KUP transporter (TC 2.A.72) family.

Its subcellular location is the cell inner membrane. The catalysed reaction is K(+)(in) + H(+)(in) = K(+)(out) + H(+)(out). Its function is as follows. Transport of potassium into the cell. Likely operates as a K(+):H(+) symporter. The sequence is that of Probable potassium transport system protein Kup 3 from Bradyrhizobium diazoefficiens (strain JCM 10833 / BCRC 13528 / IAM 13628 / NBRC 14792 / USDA 110).